The following is a 390-amino-acid chain: Transforming growth factor beta-1 proprotein (390 aa).

Positions 1 to 29 (MPPSGLRLLPLLLPLLWLLVLTPGRPAAG) are cleaved as a signal peptide. The segment at 30-74 (LSTCKTIDMELVKRKRIEAIRGQILSKLRLASPPSQGEVPPGPLP) is straightjacket domain. The arm domain stretch occupies residues 75–271 (EAVLALYNST…ATPLERAQQL (197 aa)). Residues Asn82, Asn136, and Asn176 are each glycosylated (N-linked (GlcNAc...) asparagine). A bowtie tail region spans residues 226–252 (DSKDNTLRVGINGFSSSRRGDLATIDG). Positions 244–246 (RGD) match the Cell attachment site motif. Disulfide bonds link Cys285–Cys294, Cys293–Cys356, Cys322–Cys387, and Cys326–Cys389.

Belongs to the TGF-beta family. In terms of assembly, homodimer; disulfide-linked. Interacts with the serine proteases, HTRA1 and HTRA3: the interaction with either inhibits TGFB1-mediated signaling and the HTRA protease activity is required for this inhibition. May interact with THSD4; this interaction may lead to sequestration by FBN1 microfibril assembly and attenuation of TGFB signaling. Interacts with CD109, DPT and ASPN. Interacts with EFEMP2. Interacts with TSKU; the interaction contributes to regulation of the hair cycle. Interacts with TGFBR3. Homodimer; disulfide-linked. Interacts with transforming growth factor beta-1 (TGF-beta-1) chain; interaction is non-covalent and maintains TGF-beta-1 in a latent state; each latency-associated peptide (LAP) monomer interacts with TGF-beta-1 in the other monomer. Interacts with LTBP1; leading to regulation of TGF-beta-1 activation. Interacts with LRRC32/GARP; leading to regulation of TGF-beta-1 activation on the surface of activated regulatory T-cells (Tregs). Interacts with LRRC33/NRROS; leading to regulation of TGF-beta-1 activation in macrophages and microglia. Interacts (via cell attachment site) with integrins ITGAV and ITGB6 (ITGAV:ITGB6), leading to release of the active TGF-beta-1. Latency-associated peptide: Interacts with NREP; the interaction results in a decrease in TGFB1 autoinduction. Interacts with HSP90AB1; inhibits latent TGFB1 activation. As to quaternary structure, homodimer; disulfide-linked. Interacts with TGF-beta receptors (TGFBR1 and TGFBR2), leading to signal transduction. Transforming growth factor beta-1 proprotein: The precursor proprotein is cleaved in the Golgi apparatus by FURIN to form Transforming growth factor beta-1 (TGF-beta-1) and Latency-associated peptide (LAP) chains, which remain non-covalently linked, rendering TGF-beta-1 inactive. In terms of processing, N-glycosylated. Deglycosylation leads to activation of Transforming growth factor beta-1 (TGF-beta-1); mechanisms triggering deglycosylation-driven activation of TGF-beta-1 are however unclear.

It is found in the secreted. It localises to the extracellular space. The protein localises to the extracellular matrix. Its function is as follows. Transforming growth factor beta-1 proprotein: Precursor of the Latency-associated peptide (LAP) and Transforming growth factor beta-1 (TGF-beta-1) chains, which constitute the regulatory and active subunit of TGF-beta-1, respectively. Required to maintain the Transforming growth factor beta-1 (TGF-beta-1) chain in a latent state during storage in extracellular matrix. Associates non-covalently with TGF-beta-1 and regulates its activation via interaction with 'milieu molecules', such as LTBP1, LRRC32/GARP and LRRC33/NRROS, that control activation of TGF-beta-1. Interaction with LRRC33/NRROS regulates activation of TGF-beta-1 in macrophages and microglia. Interaction with LRRC32/GARP controls activation of TGF-beta-1 on the surface of activated regulatory T-cells (Tregs). Interaction with integrins (ITGAV:ITGB6 or ITGAV:ITGB8) results in distortion of the Latency-associated peptide chain and subsequent release of the active TGF-beta-1. Functionally, multifunctional protein that regulates the growth and differentiation of various cell types and is involved in various processes, such as normal development, immune function, microglia function and responses to neurodegeneration. Activation into mature form follows different steps: following cleavage of the proprotein in the Golgi apparatus, Latency-associated peptide (LAP) and Transforming growth factor beta-1 (TGF-beta-1) chains remain non-covalently linked rendering TGF-beta-1 inactive during storage in extracellular matrix. At the same time, LAP chain interacts with 'milieu molecules', such as LTBP1, LRRC32/GARP and LRRC33/NRROS that control activation of TGF-beta-1 and maintain it in a latent state during storage in extracellular milieus. TGF-beta-1 is released from LAP by integrins (ITGAV:ITGB6 or ITGAV:ITGB8): integrin-binding to LAP stabilizes an alternative conformation of the LAP bowtie tail and results in distortion of the LAP chain and subsequent release of the active TGF-beta-1. Once activated following release of LAP, TGF-beta-1 acts by binding to TGF-beta receptors (TGFBR1 and TGFBR2), which transduce signal. While expressed by many cells types, TGF-beta-1 only has a very localized range of action within cell environment thanks to fine regulation of its activation by Latency-associated peptide chain (LAP) and 'milieu molecules'. Plays an important role in bone remodeling: acts as a potent stimulator of osteoblastic bone formation, causing chemotaxis, proliferation and differentiation in committed osteoblasts. Can promote either T-helper 17 cells (Th17) or regulatory T-cells (Treg) lineage differentiation in a concentration-dependent manner. At high concentrations, leads to FOXP3-mediated suppression of RORC and down-regulation of IL-17 expression, favoring Treg cell development. At low concentrations in concert with IL-6 and IL-21, leads to expression of the IL-17 and IL-23 receptors, favoring differentiation to Th17 cells. Stimulates sustained production of collagen through the activation of CREB3L1 by regulated intramembrane proteolysis (RIP). Mediates SMAD2/3 activation by inducing its phosphorylation and subsequent translocation to the nucleus. Positively regulates odontoblastic differentiation in dental papilla cells, via promotion of IPO7-mediated translocation of phosphorylated SMAD2 to the nucleus and subsequent transcription of target genes. Can induce epithelial-to-mesenchymal transition (EMT) and cell migration in various cell types. In Equus caballus (Horse), this protein is Transforming growth factor beta-1 proprotein (TGFB1).